Here is a 163-residue protein sequence, read N- to C-terminus: MKPSSGLRGLLVLFSLTWTCAGDWSAVKVRCSYFWFYAKIKPTLFHNLYMNPDEAFLGNDCPVTYVSPDAHYEFFYYSNKCGIITKTFQETLLLQTKIKYMSSNSGDTAEMPVSCVVTQQACMYHLSNETESGDDETSSEDMEVSYIMQSQNDLNTTFSLCAK.

The first 21 residues, 1 to 21 (MKPSSGLRGLLVLFSLTWTCA), serve as a signal peptide directing secretion.

It belongs to the PLAC1 family. As to expression, oocyte-specific.

Its subcellular location is the secreted. Its function is as follows. May be involved in cell differentiation. This is Oocyte-secreted protein 1 (OOSP1) from Bos taurus (Bovine).